Consider the following 3381-residue polypeptide: MLINIKSILWMCSTLIAAHALQKVNMEKSPPVKGSLSGKVNLPCHFSTMPTLPPSYNTTSEFLRIKWSKIELDKTGKDLKETTVLVAQNGNIKIGQDYKGRVSVPTHPEDVGDASLTMVKLLASDAGRYRCDVMYGIEDTQDTVSLTVEGVVFHYRAATSRYTLNFEMAQKACVDIGAVIATPEQLHAAYEDGFEQCDAGWLSDQTVRYPIRVPREGCYGDMMGKEGVRTYGFRAPHETYDVYCYVDHLDGDVFHITAPNKFTFEEAGEECKTQDARLATVGELQAAWRNGFDRCDYGWLLDASVRHPVTVARAQCGGGLLGVRTLYRFENQTGFPTPDSRFDAYCFKPKQNISEATTIELNMLAETVSPTLLEELQVGLDRMTPIVPLITELPVITTKVPPIGNIVNFEQKSTVQPLTSTHRSATESLPPDGSMKKPWDMDYYSPSASGPLGEPDVSEIKEEVPQSTTVVSHHAPDSWDGVKEDLQIKDSVTQIEQIEVGPLVTSMEISKHIPSKEFTVTVTPFVSTTMTLESKTEKKAISTVSESVTTSHYGFTLREGDGEDRISTVRSGQSTSIFSQIPEVITVSKTSEDTTRGQLEDVESVSASTIVSPDSDGSPMDHRQEKQTHGRITEGFLGQYVSTTPFPSQHHTEVELFPYSGDKRLVEGTSTVISPTPRTGRERTETLRPAMRTVTYTNDEIQEKITKDSSIEKIEEEGFSGMKFPTASPEQIHHTKYSVGMTKSFESPALMTTTKPGVTPTEATDVEEDFTTPSGLETDGYQDTTEYEEGITTVHLIQSTLNVEVVTVSKWSLDEDNTTSKPLGSTEHVGSPKLPPALITTTGVSGKDKEMPSLTEDGRDEFTRIPGSTQRPLEEFTEEDTTDHEKFTVRFQPTTSIATTEKSTLRDSITEERVPPFTSTEVRVTHATIEGSALDEGEDVDVSKPLSTVPQFAHPSDVEGSTFVNYSSTQEPTTYVDTSHTIPLPVIPKTEWGVLVPSIPSEGEVLGEPSQDIRVINQTHFEASMYPETVRTTTEITQEATREDFLWKEQTPEKPVSPPSSTTDTAKETTPPLDEQESDGSAYTVFEDRSVMGSDRVSVLVTTPIGKFEQHTSFPPGAVTKAKTDEVVTLTPTTGSKVTFSPWPKQKYETEGTSPRGFVSPFSIGVTQLIEETTTEKREKTSLDYIDLGSGLFEKPKATELPEFSTVKATVPSDTAAFSSADRLHTPSASTEKPPLIDREPDEETTSDMVIIGESTSRVPPTTLEDIVAKKTETDIDREYFTTSSTSTTQPTRPPTVEGKEAFGPQAFSTPEPPAGTKFHPDINVYIIEVRENKTGRMSDFSVSGHPIDSESKEDEPCSEETDPEHDLIAEILPELLGMLHSEEDEEDEECANATDVTTTPSVQYINGKHVVTTVPKDPEAAEARRGQFESVAPSQNFSDSSESDSHQFIITHAGLPTAMQPNESKETTESLEITWRPEIYPETAEPFSSGEPDIFPTASIHEGEATEGPDSITEKNPELDHLVHEHAESVPLFPEESSGDAAIDQESQKIIFSGATEGTFGEEAEKSSTTHTPSMVASSVSAPVSEDASFILTGTPQSDEPLSTVESWVEITPRHTVEFSGSPSIPIPEGSGEAEEDKDKIFAMITDLSQRNTTDPRVTSDTSKIMITESLVDVPTTTIYSISEQVSAVVPTKFVRETDTYEWVFSPPLEETTRKEEEKGTTGTASTVEVHSPTQRLDQFVSPSELESSSETPPDDSAAATRKSFTSQMTPTQSERETTSSTVVFKETEVLDNLAAQTTDPSLSSQPGVLEVSPTVPGSPVSLFMEQGSGEAAVDPETTTVSSLSLNIEPEILAKEEAAGAWSPNVETVFPFEPTEQVLSTAVDREVAETISQTSKENLVSEISGEPTHRAEIKGFSTDFPLEEDFSGDFREYSTVSYPITKEEIVMMEGSGDAAFKDTQMLPSVTPTSDLSNHTADSEEPGSTLVSTSAFPWEEFTASAEGSGEPLLSVSSSVDQVFPSAAGKASGTDSPFIDQRLGEEGAINETDQRSTILPTAEAESTKASTEEGEVKENHTVSMDFPPTVEPDELWPRQEVNPVRQGNGSEIVSEEKTQEQESFEPLQSSVAPEQTTFDSQTFPEPGLQTTGYFTLTTKKTYSTDERMEEEVISLADVSTPTLDSKGLVLYTTLPEVTEKSHFFLATASVTESVPAESVIAGSTIKEEESIKPFPKVTSPIIKESDTDLIFSGLGSGEEVLPTLGSVNFTEIEQVLSTLYPLTSQVQSLEASILNDTSGDYEGMENVANEMRPLISKTDSIFEDGETASSTTLPEILSDARTEGPFTAPLTFSTGPGQPQNQTHRRAEEIQTSRPQPLTDQVSSENSVTAETKETATPATDFLARTYDLEMAKGFVTPTPKPSDLFYEHSGEGSGELDAVGAEVHASGMTQATRQGSTTFVSDRSLEKHPKVPSVEAVTVNGFPTVSMVLPLHPEQREGSPEATGTPASTASYEKATEGAADSFQDHFWGFKDSTLKPDKRKATESIIIDLDKEDKDLILTMTESTILEIIPELTSDKNTVIDIDHTKPIYEDILGMQTDLDPEVPSGPPDSSEESTQVQEKYEAAVNLSSTEENFEASGDILLANYTQATPESKAPEDRNPLDHTDFIFTTGIPILSSETELDVLLPTATSLPIPSKSATVNPESKTEAKTLEDIFESSTLSDGQAIADQSEVISTLGYLERTQNEDEAKKYVSPSFQPEFSSGAEEALTDPTPYVSIGTTYLTAQSLTEAPDVMEGARLPDSIDTSTVSAFSELLSQTPSFPPLSIHLGSGDSEHSEDLQPSALPSTDASTPPVSSGELANIEATFKPSSEEDFYITEPPSLPPDTEPSEDESKPKLLEPTEASATELIAQEEIEIFQNSDNTTSVQVSGEAVKVFPSIETPEAEAIVTAASETKLEGATLRPHSTSASVIHGVEAGVVPQPSPQTSERPTILSPLEISPETQAALIRGEDSTVAAPKQQVPTRMLDSNKQATLSTTELNTELATPSFPLLETSNETSFLIGINEESVEGTAVYLPGPDRCKMNPCLNGGTCYPTETSYVCTCVPGYSGDRCELDFDECHSNPCRNGATCIDGFNTFRCLCLPSYVGALCEQDTETCDYGWHKFQGQCYKYFAHRRTWDAAERECRLQGAHLTSILSHEEQMFVNRVGHDYQWIGLNDKMFEHDFRWTDGSTLQYENWRPNQPDSFFSTGEDCVVIIWHENGQWNDVPCNYHLTYTCKKGTVACGQPPVVENAKTFGKMKPRYEINSLIRYHCKDGFIQRHLPTIRCLGNGRWAMPKITCLNPSAYQRTYSKKYFKNSSSAKDNSINTSKHDHRWSRRWQESRR.

The signal sequence occupies residues 1–20 (MLINIKSILWMCSTLIAAHA). In terms of domain architecture, Ig-like V-type spans 21 to 147 (LQKVNMEKSP…EDTQDTVSLT (127 aa)). 5 cysteine pairs are disulfide-bonded: Cys44–Cys131, Cys173–Cys244, Cys197–Cys218, Cys271–Cys346, and Cys295–Cys316. An N-linked (GlcNAc...) asparagine glycan is attached at Asn57. 2 Link domains span residues 151 to 246 (VVFH…YCYV) and 252 to 348 (DVFH…YCFK). 2 N-linked (GlcNAc...) asparagine glycosylation sites follow: Asn331 and Asn352. Residues 349 to 1336 (PKQNISEATT…IIEVRENKTG (988 aa)) are GAG-alpha (glucosaminoglycan attachment domain). The span at 417-427 (PLTSTHRSATE) shows a compositional bias: polar residues. Disordered stretches follow at residues 417–437 (PLTS…SMKK) and 603–623 (ESVS…MDHR). O-linked (Xyl...) (chondroitin sulfate) serine glycosylation occurs at Ser660. The segment at 816–866 (DNTTSKPLGSTEHVGSPKLPPALITTTGVSGKDKEMPSLTEDGRDEFTRIP) is disordered. N-linked (GlcNAc...) asparagine glycosylation is present at Asn817. Basic and acidic residues predominate over residues 846–863 (GKDKEMPSLTEDGRDEFT). N-linked (GlcNAc...) asparagine glycans are attached at residues Asn965 and Asn1017. A compositionally biased stretch (basic and acidic residues) spans 1043–1052 (EDFLWKEQTP). 2 disordered regions span residues 1043-1081 (EDFL…SDGS) and 1218-1244 (FSSA…PDEE). Residue Asn1333 is glycosylated (N-linked (GlcNAc...) asparagine). Positions 1337 to 3074 (RMSDFSVSGH…VEGTAVYLPG (1738 aa)) are GAG-beta. Residues 1338–1362 (MSDFSVSGHPIDSESKEDEPCSEET) are disordered. Over residues 1352 to 1362 (SKEDEPCSEET) the composition is skewed to acidic residues. A glycan (N-linked (GlcNAc...) asparagine) is linked at Asn1393. A compositionally biased stretch (basic and acidic residues) spans 1417-1428 (KDPEAAEARRGQ). 3 disordered regions span residues 1417-1446 (KDPE…ESDS), 1455-1474 (GLPT…SLEI), and 1484-1512 (TAEP…GPDS). 2 N-linked (GlcNAc...) asparagine glycosylation sites follow: Asn1437 and Asn1463. O-linked (Xyl...) (chondroitin sulfate) serine glycans are attached at residues Ser1539 and Ser1621. A glycan (N-linked (GlcNAc...) asparagine) is linked at Asn1653. Residues 1708 to 1785 (PPLEETTRKE…ERETTSSTVV (78 aa)) are disordered. Over residues 1712-1721 (ETTRKEEEKG) the composition is skewed to basic and acidic residues. Residues 1726 to 1738 (ASTVEVHSPTQRL) show a composition bias toward polar residues. Residues 1743 to 1761 (SPSELESSSETPPDDSAAA) show a composition bias toward low complexity. Residues 1764–1784 (KSFTSQMTPTQSERETTSSTV) are compositionally biased toward polar residues. O-linked (Xyl...) (chondroitin sulfate) serine glycosylation is found at Ser1928 and Ser1952. Residues 1964–1976 (PSVTPTSDLSNHT) are compositionally biased toward polar residues. Disordered regions lie at residues 1964–1986 (PSVT…GSTL) and 2041–2126 (EGAI…QSSV). 4 N-linked (GlcNAc...) asparagine glycosylation sites follow: Asn1974, Asn2045, Asn2074, and Asn2103. Residues 2065–2075 (STEEGEVKENH) are compositionally biased toward basic and acidic residues. Ser2109 is subject to Phosphoserine. Residues Ser2240 and Ser2247 are each glycosylated (O-linked (Xyl...) (chondroitin sulfate) serine). N-linked (GlcNAc...) asparagine glycans are attached at residues Asn2263, Asn2290, and Asn2356. Disordered regions lie at residues 2338 to 2388 (EGPF…AETK), 2490 to 2512 (EQRE…EKAT), and 2594 to 2615 (TDLD…TQVQ). Polar residues-rich tracts occupy residues 2345-2357 (LTFS…PQNQ) and 2367-2383 (TSRP…ENSV). Phosphoserine is present on residues Ser2607 and Ser2608. At Thr2612 the chain carries Phosphothreonine. Asn2623 and Asn2641 each carry an N-linked (GlcNAc...) asparagine glycan. Ser2714, Ser2715, and Ser2759 each carry an O-linked (Xyl...) (chondroitin sulfate) serine glycan. A disordered region spans residues 2819–2893 (PPLSIHLGSG…EPSEDESKPK (75 aa)). The span at 2840-2851 (ALPSTDASTPPV) shows a compositional bias: polar residues. Residues Asn2919 and Asn3052 are each glycosylated (N-linked (GlcNAc...) asparagine). An EGF-like 1 domain is found at 3074 to 3110 (GPDRCKMNPCLNGGTCYPTETSYVCTCVPGYSGDRCE). 11 cysteine pairs are disulfide-bonded: Cys3078–Cys3089, Cys3083–Cys3098, Cys3100–Cys3109, Cys3116–Cys3127, Cys3121–Cys3136, Cys3138–Cys3147, Cys3154–Cys3165, Cys3182–Cys3274, Cys3250–Cys3266, Cys3281–Cys3324, and Cys3310–Cys3337. The region spanning 3112 to 3148 (DFDECHSNPCRNGATCIDGFNTFRCLCLPSYVGALCE) is the EGF-like 2; calcium-binding domain. In terms of domain architecture, C-type lectin spans 3161-3275 (FQGQCYKYFA…CNYHLTYTCK (115 aa)). In terms of domain architecture, Sushi spans 3279–3339 (VACGQPPVVE…WAMPKITCLN (61 aa)). 2 N-linked (GlcNAc...) asparagine glycosylation sites follow: Asn3354 and Asn3364. A compositionally biased stretch (polar residues) spans 3355–3365 (SSSAKDNSINT). The disordered stretch occupies residues 3355 to 3381 (SSSAKDNSINTSKHDHRWSRRWQESRR).

This sequence belongs to the aggrecan/versican proteoglycan family. In terms of assembly, interacts with FBLN1. In terms of processing, phosphorylated by FAM20C in the extracellular medium. Post-translationally, proteolytically cleaved by ADAMTS5 and ADAMTS15 in the pericellular matrix surrounding myoblasts, facilitating myoblast contact and fusion which is required for skeletal muscle development and regeneration. As to expression, cerebral white matter. Isoform V0 and isoform V1 are expressed in the central nervous system, and in a number of mesenchymal and epithelial tissues; the major isoform V2 is restricted to the central nervous system.

The protein resides in the secreted. The protein localises to the extracellular space. Its subcellular location is the extracellular matrix. It localises to the cell projection. It is found in the cilium. The protein resides in the photoreceptor outer segment. The protein localises to the interphotoreceptor matrix. In terms of biological role, may play a role in intercellular signaling and in connecting cells with the extracellular matrix. May take part in the regulation of cell motility, growth and differentiation. Binds hyaluronic acid. This is Versican core protein (VCAN) from Bos taurus (Bovine).